A 267-amino-acid polypeptide reads, in one-letter code: Undecaprenyl-diphosphatase (267 aa).

7 helical membrane passes run 39-59 (PGLAFDVALHFGTLLALIWYF), 87-107 (VLYLIAATIPGGIGGLLLNDL), 112-132 (FRSPVVIATSLIVMGILLWAV), 145-165 (VTLRDAIIVGCAQVLALVPGV), 183-203 (PSVARFSFLMSMPITLAAVIV), 216-236 (LPLLAGVAAAAVSSWFAISVL), and 244-264 (SFGVFAVYRVLLGIVVFATLA).

It belongs to the UppP family.

The protein localises to the cell inner membrane. The catalysed reaction is di-trans,octa-cis-undecaprenyl diphosphate + H2O = di-trans,octa-cis-undecaprenyl phosphate + phosphate + H(+). Catalyzes the dephosphorylation of undecaprenyl diphosphate (UPP). Confers resistance to bacitracin. The chain is Undecaprenyl-diphosphatase from Gemmatimonas aurantiaca (strain DSM 14586 / JCM 11422 / NBRC 100505 / T-27).